Consider the following 241-residue polypeptide: uncharacterized protein (241 aa).

S-adenosyl-L-methionine is bound by residues 78 to 80, Gly-111, Ile-131, and 138 to 140; these read TSA and SSL.

This sequence belongs to the class IV-like SAM-binding methyltransferase superfamily. RNA methyltransferase TrmH family.

This is an uncharacterized protein from Haemophilus influenzae (strain ATCC 51907 / DSM 11121 / KW20 / Rd).